A 481-amino-acid chain; its full sequence is UDP-glucose 6-dehydrogenase 1 (481 aa).

NAD(+)-binding positions include 8–13 (GAGYVG), aspartate 33, arginine 38, 86–90 (VNTPT), 127–128 (ST), and glutamate 161. Residues 157 to 161 (EFLAE), 216 to 223 (KLAANAFL), and 256 to 269 (RIGPKFLNASVGFG) contribute to the substrate site. Cysteine 272 (nucleophile) is an active-site residue. 272-275 (CFQK) contributes to the NAD(+) binding site. 334–335 (FK) serves as a coordination point for substrate. NAD(+) is bound at residue arginine 342. Arginine 448 lines the substrate pocket.

Belongs to the UDP-glucose/GDP-mannose dehydrogenase family.

It catalyses the reaction UDP-alpha-D-glucose + 2 NAD(+) + H2O = UDP-alpha-D-glucuronate + 2 NADH + 3 H(+). Its pathway is nucleotide-sugar biosynthesis; UDP-alpha-D-glucuronate biosynthesis; UDP-alpha-D-glucuronate from UDP-alpha-D-glucose: step 1/1. Inhibited by UDP-xylose. Involved in the biosynthesis of UDP-glucuronic acid (UDP-GlcA), providing nucleotide sugars for cell-wall polymers. This chain is UDP-glucose 6-dehydrogenase 1 (UGD1), found in Arabidopsis thaliana (Mouse-ear cress).